Here is a 430-residue protein sequence, read N- to C-terminus: Adenylosuccinate synthetase (430 aa).

GTP-binding positions include 13–19 and 41–43; these read GDEGKGK and GHT. Asp-14 acts as the Proton acceptor in catalysis. Mg(2+)-binding residues include Asp-14 and Gly-41. IMP contacts are provided by residues 14–17, 39–42, Thr-130, Arg-144, Gln-225, Thr-240, and Arg-304; these read DEGK and NAGH. The Proton donor role is filled by His-42. 300–306 lines the substrate pocket; sequence STTGRAR. Residues Arg-306, 332–334, and 414–416 each bind GTP; these read KLD and STG.

The protein belongs to the adenylosuccinate synthetase family. Homodimer. Mg(2+) serves as cofactor.

The protein localises to the cytoplasm. The catalysed reaction is IMP + L-aspartate + GTP = N(6)-(1,2-dicarboxyethyl)-AMP + GDP + phosphate + 2 H(+). The protein operates within purine metabolism; AMP biosynthesis via de novo pathway; AMP from IMP: step 1/2. Its function is as follows. Plays an important role in the de novo pathway of purine nucleotide biosynthesis. Catalyzes the first committed step in the biosynthesis of AMP from IMP. The sequence is that of Adenylosuccinate synthetase from Thioalkalivibrio sulfidiphilus (strain HL-EbGR7).